The following is a 382-amino-acid chain: Solvent efflux pump periplasmic linker SrpA (382 aa).

Residues 1–23 form the signal peptide; that stretch reads MRQIRSPRALRVIPLTALMLISG. C24 carries the N-palmitoyl cysteine lipid modification. The S-diacylglycerol cysteine moiety is linked to residue C24. Residues 98-127 are a coiled coil; sequence RTYEAQLRRAEANRTSAQNLARRYETLLKT.

The protein belongs to the membrane fusion protein (MFP) (TC 8.A.1) family.

Its subcellular location is the cell inner membrane. Functionally, the periplasmic linker protein component of an organic solvent efflux pump. Involved in export of a number of low log POW compounds including hexane (log POW 3.5), toluene (log POW 2.5) and dimethylphthalate (log POW 2.3). The solvent resistance phenotype has been postulated to depend on the operon expression level. The sequence is that of Solvent efflux pump periplasmic linker SrpA (srpA) from Pseudomonas putida (Arthrobacter siderocapsulatus).